A 352-amino-acid chain; its full sequence is MSSSEKVSVGIVGASGYGGMQLVRLLSDHPQVELTYLGGNSSAGKPYAELYPHVGHRIKMIVEPIDLDVIASRCQVVFLGLPNGLACDLAPQLIERGCKVLDLSADYRFKDLDTYQAWYKTERTDQDTNAIAVYGLPELYRDDIRRAQLVGCPGCYVTASLLALAPLFKQGLIQPETAIIDAKSGTSGGGRQGKINLLLAEADASLGAYGVASHRHTPEIEQICSKLASQDIRVQFTPHLIPMPRGILATVYATLRDPGLVRDDLLTIYSAFYRAAPCVEVLPNGVYPQTKWACGTNLCYLGIEVDHRTGRVIVMSAIDNLLKGQSGQAVQCMNIMLGWEETAGLPQLAFYP.

Cysteine 155 is a catalytic residue.

It belongs to the NAGSA dehydrogenase family. Type 1 subfamily.

The protein resides in the cytoplasm. The catalysed reaction is N-acetyl-L-glutamate 5-semialdehyde + phosphate + NADP(+) = N-acetyl-L-glutamyl 5-phosphate + NADPH + H(+). The protein operates within amino-acid biosynthesis; L-arginine biosynthesis; N(2)-acetyl-L-ornithine from L-glutamate: step 3/4. In terms of biological role, catalyzes the NADPH-dependent reduction of N-acetyl-5-glutamyl phosphate to yield N-acetyl-L-glutamate 5-semialdehyde. This Picosynechococcus sp. (strain ATCC 27264 / PCC 7002 / PR-6) (Agmenellum quadruplicatum) protein is N-acetyl-gamma-glutamyl-phosphate reductase.